Consider the following 57-residue polypeptide: uncharacterized protein (57 aa).

Residues 15-37 (GLAGLICIGLTISSGFSGSSILI) traverse the membrane as a helical segment.

The protein localises to the membrane. This is an uncharacterized protein from Dictyostelium discoideum (Social amoeba).